Here is a 201-residue protein sequence, read N- to C-terminus: ADP-ribosylation factor-related protein 1 (201 aa).

Met-1 carries the N-acetylmethionine modification. Residues Gly-24–Thr-31, Asp-75–Gln-79, and Asn-134–Asp-137 contribute to the GTP site.

This sequence belongs to the small GTPase superfamily. Arf family. Interacts with SYS1.

The protein localises to the golgi apparatus. It localises to the trans-Golgi network. Trans-Golgi-associated GTPase that regulates protein sorting. Controls the targeting of ARL1 and its effector to the trans-Golgi. Required for the lipidation of chylomicrons in the intestine and required for VLDL lipidation in the liver. The polypeptide is ADP-ribosylation factor-related protein 1 (Arfrp1) (Mus musculus (Mouse)).